The primary structure comprises 231 residues: Superoxide dismutase [Mn] 1, mitochondrial (231 aa).

A mitochondrion-targeting transit peptide spans 1–29 (MAIRCVASRKTLAGLKETSSRLLRIRGIQ). Positions 55 and 103 each coordinate Mn(2+). Serine 124 carries the phosphoserine modification. Aspartate 192 and histidine 196 together coordinate Mn(2+).

The protein belongs to the iron/manganese superoxide dismutase family. Homotetramer. The cofactor is Mn(2+).

It is found in the mitochondrion matrix. It carries out the reaction 2 superoxide + 2 H(+) = H2O2 + O2. Its activity is regulated as follows. Activated by MTM1. Destroys superoxide anion radicals which are normally produced within the cells and which are toxic to biological systems. This Arabidopsis thaliana (Mouse-ear cress) protein is Superoxide dismutase [Mn] 1, mitochondrial (MSD1).